The following is a 45-amino-acid chain: Cytochrome b559 subunit beta (45 aa).

The chain crosses the membrane as a helical span at residues 20-36; that stretch reads WIAVHTLAVPTVFFLGA. A heme-binding site is contributed by histidine 24.

It belongs to the PsbE/PsbF family. In terms of assembly, heterodimer of an alpha subunit and a beta subunit. PSII is composed of 1 copy each of membrane proteins PsbA, PsbB, PsbC, PsbD, PsbE, PsbF, PsbH, PsbI, PsbJ, PsbK, PsbL, PsbM, PsbT, PsbX, PsbY, PsbZ, Psb30/Ycf12, peripheral proteins PsbO, CyanoQ (PsbQ), PsbU, PsbV and a large number of cofactors. It forms dimeric complexes. Heme b is required as a cofactor.

It is found in the cellular thylakoid membrane. Its function is as follows. This b-type cytochrome is tightly associated with the reaction center of photosystem II (PSII). PSII is a light-driven water:plastoquinone oxidoreductase that uses light energy to abstract electrons from H(2)O, generating O(2) and a proton gradient subsequently used for ATP formation. It consists of a core antenna complex that captures photons, and an electron transfer chain that converts photonic excitation into a charge separation. The chain is Cytochrome b559 subunit beta from Nostoc sp. (strain PCC 7120 / SAG 25.82 / UTEX 2576).